The primary structure comprises 435 residues: UPF0597 protein ASA_0240 (435 aa).

It belongs to the UPF0597 family.

The polypeptide is UPF0597 protein ASA_0240 (Aeromonas salmonicida (strain A449)).